Consider the following 330-residue polypeptide: Ferredoxin--NADP reductase (330 aa).

FAD-binding residues include glutamate 35, glutamine 43, tyrosine 48, valine 90, phenylalanine 123, aspartate 285, and threonine 326.

The protein belongs to the ferredoxin--NADP reductase type 2 family. As to quaternary structure, homodimer. Requires FAD as cofactor.

The enzyme catalyses 2 reduced [2Fe-2S]-[ferredoxin] + NADP(+) + H(+) = 2 oxidized [2Fe-2S]-[ferredoxin] + NADPH. The polypeptide is Ferredoxin--NADP reductase (Streptococcus pyogenes serotype M6 (strain ATCC BAA-946 / MGAS10394)).